A 645-amino-acid polypeptide reads, in one-letter code: ATP-dependent zinc metalloprotease FtsH 1 (645 aa).

Topologically, residues 1–6 are cytoplasmic; the sequence is MRSTQK. The helical transmembrane segment at 7 to 27 threads the bilayer; sequence TLALWFFLIIMAVFLFQAYES. Residues 28–110 are Periplasmic-facing; sequence KQQKAIADFN…NYERADNGGF (83 aa). A helical membrane pass occupies residues 111 to 131; that stretch reads FQSLLVNWLPLILIVAMFLFI. Over 132–645 the chain is Cytoplasmic; sequence MRQIQAGGGK…PVGNTGPVTI (514 aa). An ATP-binding site is contributed by 203–210; that stretch reads GSPGTGKT. Residue His425 coordinates Zn(2+). Residue Glu426 is part of the active site. Positions 429 and 501 each coordinate Zn(2+).

This sequence in the central section; belongs to the AAA ATPase family. It in the C-terminal section; belongs to the peptidase M41 family. In terms of assembly, homohexamer. Zn(2+) is required as a cofactor.

The protein localises to the cell inner membrane. Acts as a processive, ATP-dependent zinc metallopeptidase for both cytoplasmic and membrane proteins. Plays a role in the quality control of integral membrane proteins. This Bdellovibrio bacteriovorus (strain ATCC 15356 / DSM 50701 / NCIMB 9529 / HD100) protein is ATP-dependent zinc metalloprotease FtsH 1.